Reading from the N-terminus, the 279-residue chain is MAPTKKKTSRKPKNRCVKNEKLASFIKDFDSQVKIITEELKASVVNILKEVDSQYNIEIIKLPMAIREMCWLDYIAKGGSQKALEAAATVKVDMEEITSTVTKTPFKLDKKVKKGKCKSDETLEPNPLQSVIRTKTKAKVAAKKPSTARKTRASTANLTNTSKRTSKRGRATPSASKQIETSLLGYTPAATPRIDTSIFKTPALRTPCLQEPVYTFSANGSPLAGMDELFINVPAGDGKNIRLLASEVDSLDINRLDNQAFENIKLLSSQLQRFCKKLK.

Basic residues predominate over residues 135 to 152; it reads KTKAKVAAKKPSTARKTR. The interval 135–180 is disordered; sequence KTKAKVAAKKPSTARKTRASTANLTNTSKRTSKRGRATPSASKQIE. A compositionally biased stretch (polar residues) spans 153-163; the sequence is ASTANLTNTSK.

This sequence belongs to the borealin family. Component of the CPC at least composed of survivin/birc5, incenp, cdca8/borealin and/or cdca9/dasra-A, and aurkb/aurora-B. Interacts with incenp (via N-terminus).

It is found in the nucleus. Its subcellular location is the chromosome. The protein resides in the centromere. It localises to the cytoplasm. The protein localises to the cytoskeleton. It is found in the spindle. Functionally, component of the chromosomal passenger complex (CPC), a complex that acts as a key regulator of mitosis. The CPC complex has essential functions at the centromere in ensuring correct chromosome alignment and segregation and is required for chromatin-induced microtubule stabilization and spindle assembly. Contributes to CPC function by facilitating loading of the CPC onto chromosomes. This is Borealin (cdca8) from Xenopus tropicalis (Western clawed frog).